A 170-amino-acid chain; its full sequence is Lipoprotein signal peptidase (170 aa).

A run of 3 helical transmembrane segments spans residues 12–32, 67–87, and 94–116; these read WYWV…WVLS, WQRW…SVWL, and MWRL…IDRL. Catalysis depends on residues Asp123 and Asp141. Residues 133 to 153 traverse the membrane as a helical segment; sequence HFPAFNIADSAICVGAALIIL.

The protein belongs to the peptidase A8 family.

It localises to the cell inner membrane. The enzyme catalyses Release of signal peptides from bacterial membrane prolipoproteins. Hydrolyzes -Xaa-Yaa-Zaa-|-(S,diacylglyceryl)Cys-, in which Xaa is hydrophobic (preferably Leu), and Yaa (Ala or Ser) and Zaa (Gly or Ala) have small, neutral side chains.. It participates in protein modification; lipoprotein biosynthesis (signal peptide cleavage). Functionally, this protein specifically catalyzes the removal of signal peptides from prolipoproteins. This chain is Lipoprotein signal peptidase, found in Shewanella halifaxensis (strain HAW-EB4).